Consider the following 500-residue polypeptide: Glutamate decarboxylase 3 (500 aa).

Residue S8 is modified to Phosphoserine. An N6-(pyridoxal phosphate)lysine modification is found at K277.

It belongs to the group II decarboxylase family. As to quaternary structure, homohexamer. Interacts with calmodulin. Requires pyridoxal 5'-phosphate as cofactor. As to expression, expressed at low levels in siliques.

It catalyses the reaction L-glutamate + H(+) = 4-aminobutanoate + CO2. Catalyzes the production of GABA. The calmodulin-binding is calcium-dependent and it is proposed that this may, directly or indirectly, form a calcium regulated control of GABA biosynthesis. The polypeptide is Glutamate decarboxylase 3 (GAD3) (Arabidopsis thaliana (Mouse-ear cress)).